The following is a 471-amino-acid chain: Mitochondrial distribution and morphology protein 10 (471 aa).

The segment at 429-455 (PSSFSSPSRAANSTPAGGGQSVGGGIS) is disordered. The segment covering 444-455 (AGGGQSVGGGIS) has biased composition (gly residues).

The protein belongs to the MDM10 family. In terms of assembly, component of the ER-mitochondria encounter structure (ERMES) or MDM complex, composed of mmm1, mdm10, mdm12 and mdm34. Associates with the mitochondrial outer membrane sorting assembly machinery SAM(core) complex.

The protein resides in the mitochondrion outer membrane. Its function is as follows. Component of the ERMES/MDM complex, which serves as a molecular tether to connect the endoplasmic reticulum and mitochondria. Components of this complex are involved in the control of mitochondrial shape and protein biogenesis and may function in phospholipid exchange. mdm10 is involved in the late assembly steps of the general translocase of the mitochondrial outer membrane (TOM complex). Functions in the tom40-specific route of the assembly of outer membrane beta-barrel proteins, including the association of tom40 with the receptor tom22 and small TOM proteins. Can associate with the SAM(core) complex as well as the mdm12-mmm1 complex, both involved in late steps of the major beta-barrel assembly pathway, that is responsible for biogenesis of all outer membrane beta-barrel proteins. May act as a switch that shuttles between both complexes and channels precursor proteins into the tom40-specific pathway. Plays a role in mitochondrial morphology and in the inheritance of mitochondria. The chain is Mitochondrial distribution and morphology protein 10 (mdmB) from Aspergillus fumigatus (strain ATCC MYA-4609 / CBS 101355 / FGSC A1100 / Af293) (Neosartorya fumigata).